A 905-amino-acid chain; its full sequence is Translation initiation factor IF-2 (905 aa).

Disordered regions lie at residues 52 to 84 (QSHG…SKSV), 116 to 230 (AKKR…QKKT), and 269 to 318 (FEKE…FEKP). Polar residues predominate over residues 65–84 (KSKTTSTARVTGSSGKSKSV). Basic and acidic residues predominate over residues 116 to 138 (AKKRAEEEAKKREQVKKEAEERQ). Positions 165-178 (VVVKKGSKAAAAAK) are enriched in low complexity. Basic and acidic residues-rich tracts occupy residues 190-230 (PKVE…QKKT) and 269-278 (FEKERREIKR). The 170-residue stretch at 406–575 (TRPPVVTIMG…NLQAELMELE (170 aa)) folds into the tr-type G domain. Residues 415–422 (GHVDHGKT) form a G1 region. 415-422 (GHVDHGKT) provides a ligand contact to GTP. Residues 440–444 (GITQH) are G2. A G3 region spans residues 461–464 (DTPG). GTP is bound by residues 461 to 465 (DTPGH) and 515 to 518 (NKMD). The interval 515-518 (NKMD) is G4. A G5 region spans residues 551 to 553 (SAK).

It belongs to the TRAFAC class translation factor GTPase superfamily. Classic translation factor GTPase family. IF-2 subfamily.

It is found in the cytoplasm. Functionally, one of the essential components for the initiation of protein synthesis. Protects formylmethionyl-tRNA from spontaneous hydrolysis and promotes its binding to the 30S ribosomal subunits. Also involved in the hydrolysis of GTP during the formation of the 70S ribosomal complex. This Psychrobacter sp. (strain PRwf-1) protein is Translation initiation factor IF-2.